Here is a 191-residue protein sequence, read N- to C-terminus: Adenylate kinase (191 aa).

10 to 15 provides a ligand contact to ATP; that stretch reads GAGKGT. The tract at residues 30 to 59 is NMP; the sequence is STGDMLRAARTSGTEMGNLVAGVMDRGELV. Residues T31, R36, 57-59, 83-86, and Q90 each bind AMP; these read ELV and GFPR. The segment at 124–140 is LID; sequence NRAKEAAAAGQPVRADD. R125 provides a ligand contact to ATP. 2 residues coordinate AMP: R137 and R148. G176 contributes to the ATP binding site.

Belongs to the adenylate kinase family. In terms of assembly, monomer.

It is found in the cytoplasm. The enzyme catalyses AMP + ATP = 2 ADP. It functions in the pathway purine metabolism; AMP biosynthesis via salvage pathway; AMP from ADP: step 1/1. Its function is as follows. Catalyzes the reversible transfer of the terminal phosphate group between ATP and AMP. Plays an important role in cellular energy homeostasis and in adenine nucleotide metabolism. In Jannaschia sp. (strain CCS1), this protein is Adenylate kinase.